Reading from the N-terminus, the 61-residue chain is Large ribosomal subunit protein bL28 (61 aa).

Residues 1–21 are disordered; that stretch reads MAKDYVTGKKTTFGNKRSHAM.

The protein belongs to the bacterial ribosomal protein bL28 family.

The sequence is that of Large ribosomal subunit protein bL28 from Lactobacillus helveticus (strain DPC 4571).